Reading from the N-terminus, the 379-residue chain is Gonadotropin-releasing hormone II receptor (379 aa).

The Extracellular segment spans residues Met-1 to Arg-40. A helical transmembrane segment spans residues Val-41 to Trp-60. Over Ser-61–Arg-76 the chain is Cytoplasmic. The chain crosses the membrane as a helical span at residues Thr-77–Leu-96. The Extracellular segment spans residues Asp-97 to Arg-114. A glycan (N-linked (GlcNAc...) asparagine) is linked at Asn-101. A disulfide bridge connects residues Cys-113 and Cys-188. Residues Thr-115–Leu-136 traverse the membrane as a helical segment. Topologically, residues Asp-137 to Trp-160 are cytoplasmic. The helical transmembrane segment at Gly-161–His-178 threads the bilayer. At Arg-179 to Asn-204 the chain is on the extracellular side. The chain crosses the membrane as a helical span at residues Leu-205–Ser-224. The Cytoplasmic segment spans residues Arg-225–Thr-278. The helical transmembrane segment at Pro-279 to Val-297 threads the bilayer. The Extracellular segment spans residues Pro-298 to His-303. Residues Ile-304–Phe-323 form a helical membrane-spanning segment. Over Thr-324–Ile-379 the chain is Cytoplasmic.

It belongs to the G-protein coupled receptor 1 family. Post-translationally, phosphorylated on the C-terminal cytoplasmic tail.

Its subcellular location is the cell membrane. Functionally, receptor for gonadotropin releasing hormone II (GnRH II). This receptor mediates its action by association with G proteins that activate a phosphatidylinositol-calcium second messenger system. The polypeptide is Gonadotropin-releasing hormone II receptor (GNRHR2) (Chlorocebus aethiops (Green monkey)).